Reading from the N-terminus, the 158-residue chain is Crossover junction endodeoxyribonuclease RuvC (158 aa).

Catalysis depends on residues aspartate 7, glutamate 66, and aspartate 139. Residues aspartate 7, glutamate 66, and aspartate 139 each coordinate Mg(2+).

This sequence belongs to the RuvC family. In terms of assembly, homodimer which binds Holliday junction (HJ) DNA. The HJ becomes 2-fold symmetrical on binding to RuvC with unstacked arms; it has a different conformation from HJ DNA in complex with RuvA. In the full resolvosome a probable DNA-RuvA(4)-RuvB(12)-RuvC(2) complex forms which resolves the HJ. It depends on Mg(2+) as a cofactor.

It localises to the cytoplasm. The catalysed reaction is Endonucleolytic cleavage at a junction such as a reciprocal single-stranded crossover between two homologous DNA duplexes (Holliday junction).. In terms of biological role, the RuvA-RuvB-RuvC complex processes Holliday junction (HJ) DNA during genetic recombination and DNA repair. Endonuclease that resolves HJ intermediates. Cleaves cruciform DNA by making single-stranded nicks across the HJ at symmetrical positions within the homologous arms, yielding a 5'-phosphate and a 3'-hydroxyl group; requires a central core of homology in the junction. The consensus cleavage sequence is 5'-(A/T)TT(C/G)-3'. Cleavage occurs on the 3'-side of the TT dinucleotide at the point of strand exchange. HJ branch migration catalyzed by RuvA-RuvB allows RuvC to scan DNA until it finds its consensus sequence, where it cleaves and resolves the cruciform DNA. The polypeptide is Crossover junction endodeoxyribonuclease RuvC (Carboxydothermus hydrogenoformans (strain ATCC BAA-161 / DSM 6008 / Z-2901)).